The chain runs to 565 residues: FAD-linked oxidoreductase ZEB1 (565 aa).

A signal peptide spans 1 to 27 (MKLSPSKYLPVLLGTLSLTIANPSADC). 3 N-linked (GlcNAc...) asparagine glycosylation sites follow: Asn-46, Asn-82, and Asn-100. Residues 115-293 (LGNYVSYAIA…ISMTVKAHPG (179 aa)) enclose the FAD-binding PCMH-type domain. N-linked (GlcNAc...) asparagine glycans are attached at residues Asn-340, Asn-352, and Asn-421.

This sequence belongs to the oxygen-dependent FAD-linked oxidoreductase family.

It participates in mycotoxin biosynthesis. Its function is as follows. FAD-linked oxidoreductase; part of the gene cluster that mediates the biosynthesis of zearalenone (ZEA), a nonsteroid estrogen that is a contaminant of cereal grains and causes estrogenic disorders in humans and animals. The ZEA backbone is synthesized from a single acetyl-CoA molecule and eight malonyl-CoA molecules. The reducing polyketide synthase ZEA2 is proposed to synthesize a reduced hexaketide intermediate by using different combinations of its reductive domains during each round of condensation. The hexaketide thioester is then transacylated to the non-reducing polyketide synthase ZEA1 and is further condensed with three malonyl-CoAs without reductive tailoring to yield a mixed reduced/unreduced nonaketide. ZEA1 must be able to interact with ZEA2 to facilitate starter-unit acyltransfer and initiate polyketide biosynthesis. ZEA1 also mediates the required C2-C7 cyclization to form the resorcylate core and catalyzes the formation of the macrolactone. ZEB1 is then responsible for the chemical conversion of beta-zearalenonol (beta-ZOL) to ZEA in the biosynthetic pathway. This Gibberella zeae (strain ATCC MYA-4620 / CBS 123657 / FGSC 9075 / NRRL 31084 / PH-1) (Wheat head blight fungus) protein is FAD-linked oxidoreductase ZEB1.